Here is a 563-residue protein sequence, read N- to C-terminus: Arginine--tRNA ligase (563 aa).

The 'HIGH' region signature appears at 120-130 (PNIAKPFHIGH).

The protein belongs to the class-I aminoacyl-tRNA synthetase family. In terms of assembly, monomer.

Its subcellular location is the cytoplasm. It carries out the reaction tRNA(Arg) + L-arginine + ATP = L-arginyl-tRNA(Arg) + AMP + diphosphate. In Clostridium botulinum (strain Langeland / NCTC 10281 / Type F), this protein is Arginine--tRNA ligase.